A 177-amino-acid polypeptide reads, in one-letter code: Large ribosomal subunit protein uL6 (177 aa).

The protein belongs to the universal ribosomal protein uL6 family. Part of the 50S ribosomal subunit.

This protein binds to the 23S rRNA, and is important in its secondary structure. It is located near the subunit interface in the base of the L7/L12 stalk, and near the tRNA binding site of the peptidyltransferase center. In Paracidovorax citrulli (strain AAC00-1) (Acidovorax citrulli), this protein is Large ribosomal subunit protein uL6.